Reading from the N-terminus, the 218-residue chain is Peptide methionine sulfoxide reductase MsrA (218 aa).

The segment at methionine 1–proline 28 is disordered. Cysteine 57 is a catalytic residue.

The protein belongs to the MsrA Met sulfoxide reductase family.

It carries out the reaction L-methionyl-[protein] + [thioredoxin]-disulfide + H2O = L-methionyl-(S)-S-oxide-[protein] + [thioredoxin]-dithiol. The catalysed reaction is [thioredoxin]-disulfide + L-methionine + H2O = L-methionine (S)-S-oxide + [thioredoxin]-dithiol. Its function is as follows. Has an important function as a repair enzyme for proteins that have been inactivated by oxidation. Catalyzes the reversible oxidation-reduction of methionine sulfoxide in proteins to methionine. In Brucella anthropi (strain ATCC 49188 / DSM 6882 / CCUG 24695 / JCM 21032 / LMG 3331 / NBRC 15819 / NCTC 12168 / Alc 37) (Ochrobactrum anthropi), this protein is Peptide methionine sulfoxide reductase MsrA.